Here is a 343-residue protein sequence, read N- to C-terminus: Methionine import ATP-binding protein MetN 1 (343 aa).

An ABC transporter domain is found at 2–241 (IKLSNITKVF…PKTPLAQKFI (240 aa)). Residue 38 to 45 (GASGAGKS) participates in ATP binding.

This sequence belongs to the ABC transporter superfamily. Methionine importer (TC 3.A.1.24) family. As to quaternary structure, the complex is composed of two ATP-binding proteins (MetN), two transmembrane proteins (MetI) and a solute-binding protein (MetQ).

The protein resides in the cell inner membrane. It catalyses the reaction L-methionine(out) + ATP + H2O = L-methionine(in) + ADP + phosphate + H(+). The enzyme catalyses D-methionine(out) + ATP + H2O = D-methionine(in) + ADP + phosphate + H(+). Part of the ABC transporter complex MetNIQ involved in methionine import. Responsible for energy coupling to the transport system. This is Methionine import ATP-binding protein MetN 1 from Salmonella typhimurium (strain LT2 / SGSC1412 / ATCC 700720).